A 292-amino-acid chain; its full sequence is MRIRVPATIANFGPGFDVFGVGIGEPYDELKFVESDEWEIEVEGYDVPTDGRNVAVVAARALATLVGEELYLRMKLRKEIRPRSGLGSSGASSLAGALAAARVLGIEDDGLIIKAALAGEEAASGSAHGDNVVPAYYGDFTIIESLNPLRVHRIPVDFPLVVVLPQIEVPTREARRILPERVPMGDAVRNVALAGALVKALTSGDVQTVGRLLEDRIALPYRLRLMPWFARVWKAALDAGAYGAFVSGSGPAIFALGEDLHAIGKAIAEAFLEIGVDAEVYITRAGVGAFWL.

81–91 (RPRSGLGSSGA) contacts ATP.

Belongs to the GHMP kinase family. Homoserine kinase subfamily.

It is found in the cytoplasm. It catalyses the reaction L-homoserine + ATP = O-phospho-L-homoserine + ADP + H(+). It participates in amino-acid biosynthesis; L-threonine biosynthesis; L-threonine from L-aspartate: step 4/5. Functionally, catalyzes the ATP-dependent phosphorylation of L-homoserine to L-homoserine phosphate. This chain is Homoserine kinase, found in Thermococcus kodakarensis (strain ATCC BAA-918 / JCM 12380 / KOD1) (Pyrococcus kodakaraensis (strain KOD1)).